A 188-amino-acid chain; its full sequence is dCTP deaminase (188 aa).

DCTP-binding positions include Lys111–Arg116, Thr135–Glu137, Gln156, Tyr170, and Gln180. Glu137 (proton donor/acceptor) is an active-site residue.

It belongs to the dCTP deaminase family. Homotrimer.

It catalyses the reaction dCTP + H2O + H(+) = dUTP + NH4(+). The protein operates within pyrimidine metabolism; dUMP biosynthesis; dUMP from dCTP (dUTP route): step 1/2. Its function is as follows. Catalyzes the deamination of dCTP to dUTP. The polypeptide is dCTP deaminase (Cupriavidus taiwanensis (strain DSM 17343 / BCRC 17206 / CCUG 44338 / CIP 107171 / LMG 19424 / R1) (Ralstonia taiwanensis (strain LMG 19424))).